The chain runs to 297 residues: Homeobox protein HMX3 (297 aa).

2 disordered regions span residues 24–43 (NSDSKPSKPKPILAPTKAGL) and 96–172 (AAQK…RKKK). Composition is skewed to basic and acidic residues over residues 109-123 (TDRDSPELVLKSDPD) and 145-166 (EDGKKEGGIDDWKKSDDGADKK). A DNA-binding region (homeobox) is located at residues 170-229 (KKKTRTVFSRSQVFQLESTFDMKRYLSSSERAGLAASLHLTETQVKIWFQNRRNKWKRQL).

It belongs to the HMX homeobox family. Expressed in the ear placode and vesicle and in cells forming the vestibulo-acoustic ganglion. Also expressed in the lateral line.

Its subcellular location is the nucleus. Its function is as follows. Transcription factor involved in specification of neuronal cell types and which is required for inner ear and hypothalamus development. Binds to the 5'-CAAGTG-3' core sequence. This chain is Homeobox protein HMX3 (hmx3), found in Danio rerio (Zebrafish).